A 468-amino-acid polypeptide reads, in one-letter code: uncharacterized protein (468 aa).

Transmembrane regions (helical) follow at residues Ile-59–Ile-79, Thr-135–Val-155, Val-215–Leu-235, Thr-297–Val-317, His-348–Tyr-368, and Val-385–Phe-405.

The protein localises to the membrane. This is an uncharacterized protein from Caenorhabditis elegans.